A 446-amino-acid chain; its full sequence is UDP-N-acetylglucosamine--dolichyl-phosphate N-acetylglucosaminephosphotransferase (446 aa).

2 helical membrane-spanning segments follow: residues 1 to 21 and 25 to 45; these read MIES…LMNQ and PLLS…MFIP. UDP-N-acetyl-alpha-D-glucosamine contacts are provided by residues 59 to 61 and Glu71; that span reads KDM. The next 2 membrane-spanning stretches (helical) occupy residues 73-93 and 123-143; these read MGAV…PVLF and LLGA…LGIL. Lys154 contributes to the dolichyl phosphate binding site. The next 2 membrane-spanning stretches (helical) occupy residues 155-175 and 191-211; these read FFLP…DYGV and SLIN…IFCP. 208–216 lines the dolichyl phosphate pocket; it reads IFCPNSINI. Asn215 lines the Mg(2+) pocket. The next 4 membrane-spanning stretches (helical) occupy residues 216–236, 254–274, 282–302, and 311–331; these read IIAG…LVIA, AHLL…GLLK, VFVG…VGIL, and LFFI…FGLV. Residue Asn221 coordinates UDP-N-acetyl-alpha-D-glucosamine. Asp286 contacts Mg(2+). 335-337 contributes to the UDP-N-acetyl-alpha-D-glucosamine binding site; that stretch reads RHR. Asn395 is a glycosylation site (N-linked (GlcNAc...) asparagine). Residues 412 to 432 form a helical membrane-spanning segment; the sequence is DHLTICIMGLQLLTGIFGLII.

It belongs to the glycosyltransferase 4 family. It depends on Mg(2+) as a cofactor.

The protein resides in the endoplasmic reticulum membrane. It catalyses the reaction a di-trans,poly-cis-dolichyl phosphate + UDP-N-acetyl-alpha-D-glucosamine = an N-acetyl-alpha-D-glucosaminyl-diphospho-di-trans,poly-cis-dolichol + UMP. It functions in the pathway protein modification; protein glycosylation. Its activity is regulated as follows. Inhibited by natural nucleoside antibiotic tunicamycin, which acts as a structural analog and competitor of UDP-GlcNAc. Functionally, UDP-N-acetylglucosamine--dolichyl-phosphate N-acetylglucosaminephosphotransferase that operates in the biosynthetic pathway of dolichol-linked oligosaccharides, the glycan precursors employed in protein asparagine (N)-glycosylation. The assembly of dolichol-linked oligosaccharides begins on the cytosolic side of the endoplasmic reticulum membrane and finishes in its lumen. The sequential addition of sugars to dolichol pyrophosphate produces dolichol-linked oligosaccharides containing fourteen sugars, including two GlcNAcs, nine mannoses and three glucoses. Once assembled, the oligosaccharide is transferred from the lipid to nascent proteins by oligosaccharyltransferases. Catalyzes the initial step of dolichol-linked oligosaccharide biosynthesis, transfering GlcNAc-1-P from cytosolic UDP-GlcNAc onto the carrier lipid dolichyl phosphate (P-dolichol), yielding GlcNAc-P-P-dolichol embedded in the cytoplasmic leaflet of the endoplasmic reticulum membrane. The sequence is that of UDP-N-acetylglucosamine--dolichyl-phosphate N-acetylglucosaminephosphotransferase (gpt2) from Schizosaccharomyces pombe (strain 972 / ATCC 24843) (Fission yeast).